The following is a 305-amino-acid chain: MSQRELVVLGTASQVPTRQRNHNGYLLRWGREGVLFDPGEGTQRQMAFAGVAATDITRIALTHFHGDHCLGLPGIVQRINLDRVAHPVDAYYPASGQEYFDRLCSASSFYRRVDLRTHPIAGPGPLDAPDAPFTIEAVALSHPVEAFGYRLTEPAGVRMLPDRLAALGIHGPRIGELQRAGSLLVDGRTVTVAEVSEPRPGQSFAFVMDTRLCPGVAELAAGVDMLVIEATFLDADAHLAEEYGHLTAGQAARVAADADVRTLVLTHFSQRYRTLDDHRAEAEKHFSGEVVVAEDLHRIPLPPRR.

His-63, His-65, Asp-67, His-68, His-142, Asp-209, and His-267 together coordinate Zn(2+). Asp-67 serves as the catalytic Proton acceptor.

This sequence belongs to the RNase Z family. As to quaternary structure, homodimer. Requires Zn(2+) as cofactor.

The enzyme catalyses Endonucleolytic cleavage of RNA, removing extra 3' nucleotides from tRNA precursor, generating 3' termini of tRNAs. A 3'-hydroxy group is left at the tRNA terminus and a 5'-phosphoryl group is left at the trailer molecule.. Its function is as follows. Zinc phosphodiesterase, which displays some tRNA 3'-processing endonuclease activity. Probably involved in tRNA maturation, by removing a 3'-trailer from precursor tRNA. The chain is Ribonuclease Z from Nocardia farcinica (strain IFM 10152).